Consider the following 601-residue polypeptide: Tripeptidyl-peptidase SED4 (601 aa).

The N-terminal stretch at 1–22 (MVSFTLRAIGACLVSLPALVTA) is a signal peptide. The propeptide at 23 to 202 (APTSHISGDF…SVFTSDLEIT (180 aa)) is removed in mature form. N-linked (GlcNAc...) asparagine glycans are attached at residues N210 and N281. The 390-residue stretch at 212 to 601 (TITPDCIRDL…ETLSKLVLQY (390 aa)) folds into the Peptidase S53 domain. Residues E288 and D292 each act as charge relay system in the active site. N323 is a glycosylation site (N-linked (GlcNAc...) asparagine). S504 acts as the Charge relay system in catalysis. D546 and I547 together coordinate Ca(2+). An N-linked (GlcNAc...) asparagine glycan is attached at N575. The Ca(2+) site is built by G579 and D581.

It depends on Ca(2+) as a cofactor.

It localises to the secreted. The protein resides in the extracellular space. The catalysed reaction is Release of an N-terminal tripeptide from a polypeptide.. Functionally, secreted tripeptidyl-peptidase which degrades proteins at acidic pHs and is involved in virulence. The protein is Tripeptidyl-peptidase SED4 (SED4) of Arthroderma otae (strain ATCC MYA-4605 / CBS 113480) (Microsporum canis).